The sequence spans 447 residues: Ribosomal protein uS12 methylthiotransferase RimO (447 aa).

Positions 10 to 120 (PKVGFVSLGC…VVNAVHDVVP (111 aa)) constitute an MTTase N-terminal domain. [4Fe-4S] cluster-binding residues include C19, C55, C84, C153, C157, and C160. A Radical SAM core domain is found at 139-377 (LTPRHYAYLK…MAHQQAISAA (239 aa)). The TRAM domain maps to 380 to 447 (QMKIGKEIEV…DEYDLWAEML (68 aa)).

The protein belongs to the methylthiotransferase family. RimO subfamily. The cofactor is [4Fe-4S] cluster.

The protein resides in the cytoplasm. It catalyses the reaction L-aspartate(89)-[ribosomal protein uS12]-hydrogen + (sulfur carrier)-SH + AH2 + 2 S-adenosyl-L-methionine = 3-methylsulfanyl-L-aspartate(89)-[ribosomal protein uS12]-hydrogen + (sulfur carrier)-H + 5'-deoxyadenosine + L-methionine + A + S-adenosyl-L-homocysteine + 2 H(+). Its function is as follows. Catalyzes the methylthiolation of an aspartic acid residue of ribosomal protein uS12. This Pseudomonas savastanoi pv. phaseolicola (strain 1448A / Race 6) (Pseudomonas syringae pv. phaseolicola (strain 1448A / Race 6)) protein is Ribosomal protein uS12 methylthiotransferase RimO.